The sequence spans 222 residues: Phosphate-specific transport system accessory protein PhoU homolog 1 (222 aa).

The protein belongs to the PhoU family. In terms of assembly, homodimer.

It localises to the cytoplasm. In terms of biological role, plays a role in the regulation of phosphate uptake. The polypeptide is Phosphate-specific transport system accessory protein PhoU homolog 1 (phoU1) (Mycobacterium leprae (strain TN)).